We begin with the raw amino-acid sequence, 507 residues long: Probable Xaa-Pro aminopeptidase TRV_02643 (507 aa).

The Mn(2+) site is built by Asp275, Asp286, Glu434, and Glu478.

It belongs to the peptidase M24B family. Requires Mn(2+) as cofactor.

It catalyses the reaction Release of any N-terminal amino acid, including proline, that is linked to proline, even from a dipeptide or tripeptide.. Its function is as follows. Catalyzes the removal of a penultimate prolyl residue from the N-termini of peptides. The protein is Probable Xaa-Pro aminopeptidase TRV_02643 of Trichophyton verrucosum (strain HKI 0517).